The following is a 75-amino-acid chain: Parvalbumin beta 3 (75 aa).

Residue Ala1 is modified to N-acetylalanine. Residues 26 to 61 (YKAFFAKKAFFVIDQDKSGFIEEDELKLFLQVFSAG) enclose the EF-hand domain. Asp39, Asp41, Ser43, Phe45, Glu47, and Glu50 together coordinate Ca(2+).

The protein belongs to the parvalbumin family.

In terms of biological role, in muscle, parvalbumin is thought to be involved in relaxation after contraction. It binds two calcium ions. The protein is Parvalbumin beta 3 of Merluccius gayi (South Pacific hake).